A 597-amino-acid chain; its full sequence is Elongation factor 4 (597 aa).

One can recognise a tr-type G domain in the interval 2–184; sequence KNIRNFSIIA…SIVEHLPAPE (183 aa). Residues 14-19 and 131-134 contribute to the GTP site; these read DHGKST and NKID.

Belongs to the TRAFAC class translation factor GTPase superfamily. Classic translation factor GTPase family. LepA subfamily.

The protein localises to the cell inner membrane. It carries out the reaction GTP + H2O = GDP + phosphate + H(+). Required for accurate and efficient protein synthesis under certain stress conditions. May act as a fidelity factor of the translation reaction, by catalyzing a one-codon backward translocation of tRNAs on improperly translocated ribosomes. Back-translocation proceeds from a post-translocation (POST) complex to a pre-translocation (PRE) complex, thus giving elongation factor G a second chance to translocate the tRNAs correctly. Binds to ribosomes in a GTP-dependent manner. The protein is Elongation factor 4 of Desulfotalea psychrophila (strain LSv54 / DSM 12343).